The following is a 552-amino-acid chain: Urocanate hydratase (552 aa).

Residues 49-50 (GG), Gln-127, 173-175 (GMG), Asp-193, 239-240 (NA), 260-264 (QTSAH), 270-271 (YI), and Tyr-319 contribute to the NAD(+) site. Residue Cys-407 is part of the active site. Gly-489 contacts NAD(+).

The protein belongs to the urocanase family. NAD(+) is required as a cofactor.

Its subcellular location is the cytoplasm. The catalysed reaction is 4-imidazolone-5-propanoate = trans-urocanate + H2O. The protein operates within amino-acid degradation; L-histidine degradation into L-glutamate; N-formimidoyl-L-glutamate from L-histidine: step 2/3. Functionally, catalyzes the conversion of urocanate to 4-imidazolone-5-propionate. This Bacillus cereus (strain G9842) protein is Urocanate hydratase.